A 115-amino-acid polypeptide reads, in one-letter code: Large ribosomal subunit protein bL20 (115 aa).

This sequence belongs to the bacterial ribosomal protein bL20 family.

Binds directly to 23S ribosomal RNA and is necessary for the in vitro assembly process of the 50S ribosomal subunit. It is not involved in the protein synthesizing functions of that subunit. This chain is Large ribosomal subunit protein bL20, found in Borrelia garinii subsp. bavariensis (strain ATCC BAA-2496 / DSM 23469 / PBi) (Borreliella bavariensis).